Consider the following 89-residue polypeptide: Small ribosomal subunit protein uS15 (89 aa).

Belongs to the universal ribosomal protein uS15 family. Part of the 30S ribosomal subunit. Forms a bridge to the 50S subunit in the 70S ribosome, contacting the 23S rRNA.

Functionally, one of the primary rRNA binding proteins, it binds directly to 16S rRNA where it helps nucleate assembly of the platform of the 30S subunit by binding and bridging several RNA helices of the 16S rRNA. Forms an intersubunit bridge (bridge B4) with the 23S rRNA of the 50S subunit in the ribosome. The chain is Small ribosomal subunit protein uS15 from Lactobacillus delbrueckii subsp. bulgaricus (strain ATCC 11842 / DSM 20081 / BCRC 10696 / JCM 1002 / NBRC 13953 / NCIMB 11778 / NCTC 12712 / WDCM 00102 / Lb 14).